A 225-amino-acid chain; its full sequence is Orotate phosphoribosyltransferase (225 aa).

Position 29 (K29) interacts with 5-phospho-alpha-D-ribose 1-diphosphate. 37–38 (FF) is a binding site for orotate. 5-phospho-alpha-D-ribose 1-diphosphate is bound by residues 75 to 76 (YK), R105, K106, K109, H111, and 130 to 138 (DDVITAGTS). T134 and R162 together coordinate orotate.

It belongs to the purine/pyrimidine phosphoribosyltransferase family. PyrE subfamily. As to quaternary structure, homodimer. Mg(2+) is required as a cofactor.

The catalysed reaction is orotidine 5'-phosphate + diphosphate = orotate + 5-phospho-alpha-D-ribose 1-diphosphate. It functions in the pathway pyrimidine metabolism; UMP biosynthesis via de novo pathway; UMP from orotate: step 1/2. In terms of biological role, catalyzes the transfer of a ribosyl phosphate group from 5-phosphoribose 1-diphosphate to orotate, leading to the formation of orotidine monophosphate (OMP). In Bordetella petrii (strain ATCC BAA-461 / DSM 12804 / CCUG 43448), this protein is Orotate phosphoribosyltransferase.